We begin with the raw amino-acid sequence, 161 residues long: MKYDTSELCDIYQEDVNVVEPLFSNFGGRSSFGGQIITVKCFEDNGLLYDLLEQNGRGRVLLVDGGGSIRRALVDAELARLATQNEWEGLVIYGAVRQVDDLEELDIGIQAIAAIPVGAAGEGIGESDVRVNFGGVTFFSGDHLYADNTGIILSEDPLDIE.

This sequence belongs to the RraA family. In terms of assembly, homotrimer. Binds to both RNA-binding sites in the C-terminal region of Rne and to RhlB.

It localises to the cytoplasm. Its function is as follows. Globally modulates RNA abundance by binding to RNase E (Rne) and regulating its endonucleolytic activity. Can modulate Rne action in a substrate-dependent manner by altering the composition of the degradosome. Modulates RNA-binding and helicase activities of the degradosome. This Salmonella choleraesuis (strain SC-B67) protein is Regulator of ribonuclease activity A.